Reading from the N-terminus, the 484-residue chain is UDP-N-acetylmuramate--L-alanine ligase (484 aa).

125–131 (GTHGKTT) serves as a coordination point for ATP.

It belongs to the MurCDEF family.

It localises to the cytoplasm. The enzyme catalyses UDP-N-acetyl-alpha-D-muramate + L-alanine + ATP = UDP-N-acetyl-alpha-D-muramoyl-L-alanine + ADP + phosphate + H(+). It functions in the pathway cell wall biogenesis; peptidoglycan biosynthesis. In terms of biological role, cell wall formation. The protein is UDP-N-acetylmuramate--L-alanine ligase of Buchnera aphidicola subsp. Acyrthosiphon pisum (strain Tuc7).